The chain runs to 800 residues: MLQRRFISSSGIKRLLHRESNKVMHTVFFKVRYYSTELIKKKHKEDIEDWVKAQLKDSSTISGVYESRNKLDWMDSITKSPSSLDILKNQYNIVKDKDFGILWKQKFESADPDILMTIISLSTNQKVLFSIQQLLILINSLHFLKRDYDIGQIYTTYEQFTPLLASHTDKGTYGQFIEIMLVVQHNLHHFDVCETLFAEYIKYCKVKPQMISLGLNSFIRSNNTQLAVEFYTQAITNPDTFPITEKQLFEFLRCMERYLDMSSMKHIFYLWLKVKCGDEQSSSTNLPSFKTLAIIHRMLLRFSNTDELNDFLTNPVVLSTGYTSSVQFELIEFCHSLYCIKGDRTKSIDDSILMERVDKFITRLNNNISTRKELYMSVVQAYVSTNNFENLKVILEKIQRDNDISIDGSFHLCISRYFVNTNQFEGLFKYYRSVVKTTDGKTRLRPAFIQQLWSCAVNVYPMLAKEITNDLLVTLKRSQYSKCLTWVYTFLQENAHIHTRKINGGEDSSLSGFNAVDFERFEEFKKKVSHNDVYGAELVISNSLKEGIAPQFSFLYSVLALCLRNSLTGLARVVDVILRTRFRYIPLKVDILWLKWEIISNYRSFEKLSAEHLKELEFKLKEFERVHQKELSVQNYLQLTQICFHTRDFKYACYLISQARKNLDTSNNKQWMMYYMTSLKLASRMHESERFSRILKDWNCNHRASLITPGCIRQIKGFMKYFEKRPAYISTAASIDNKEIKDRIDELVLRYVDYKYQGLENMRKLTLFLKEWFDEEISLLKLEQNERKMKLFEENKKEEE.

To yeast YHR160C.

It localises to the mitochondrion matrix. Functionally, required for translation of the mitochondrial gene for cytochrome c oxidase subunit II (COX2). In Saccharomyces cerevisiae (strain ATCC 204508 / S288c) (Baker's yeast), this protein is Protein PET111, mitochondrial (PET111).